The primary structure comprises 1004 residues: Protein CHUP1, chloroplastic (1004 aa).

The required for chloroplast localization stretch occupies residues 1–25 (MFVRIGFVVAASIAAVTVKRLNVKP). Residues 22-63 (NVKPSKPSKPSDNGEGGDKEQSVDPDYNLNDKNLQEEEEEEE) form a disordered region. The stretch at 123-341 (EMAYNDGELE…KQVEGLQMNR (219 aa)) forms a coiled coil. The tract at residues 269-290 (LEVQVMELKRKNRELQHEKREL) is leucine-zipper 1. 4 disordered regions span residues 398–482 (GSER…SMNK), 504–536 (FGQVDQESPGTPETPNLPRIRTQQQASSPGEGL), 612–718 (TATG…GNKV), and 736–755 (SKKEGAPSLISSGTGNSSAA). Position 399 is a phosphoserine (Ser-399). Polar residues predominate over residues 409–419 (ESNYSQPSSPG). Residues 427-439 (SMDSSTSRFSSFS) are compositionally biased toward low complexity. 2 stretches are compositionally biased toward polar residues: residues 504 to 517 (FGQVDQESPGTPET) and 612 to 624 (TATGDQSNESNES). Over residues 670–706 (ARPPLPGGGPPPPPPPPGGGPPPPPGGGPPPPPPPPG) the composition is skewed to pro residues. Residues 744-755 (LISSGTGNSSAA) are compositionally biased toward polar residues. The leucine-zipper 2 stretch occupies residues 802-823 (LLAFVSWLDEELSFLVDERAVL). The disordered stretch occupies residues 979–1004 (RSRAKTESGDNNNNNNNNSNEEESVN).

In terms of tissue distribution, expressed in cauline leaves, rosette leaves, stems and flowers, but not in roots.

It localises to the plastid. The protein resides in the chloroplast outer membrane. Required for the positioning and movement of chloroplasts. Interacts with profilin and actin independent of its polymerization status. Regulates chloroplast localization by anchoring chloroplasts to the plasma membrane and forming a bridge to the actin cytoskeleton. This Arabidopsis thaliana (Mouse-ear cress) protein is Protein CHUP1, chloroplastic (CHUP1).